The chain runs to 602 residues: Exo-poly-alpha-D-galacturonosidase (602 aa).

An N-terminal signal peptide occupies residues 1–27; the sequence is MKVITFSRRSALASIVATCLMSTPALA. The region spanning 32–149 is the Fibronectin type-III domain; that stretch reads APQKLQIPTL…TVTTTTTAVP (118 aa). D395 functions as the Proton donor in the catalytic mechanism. The active site involves H428.

Belongs to the glycosyl hydrolase 28 family.

It localises to the secreted. It catalyses the reaction [(1-&gt;4)-alpha-D-galacturonosyl](n) + H2O = alpha-D-galacturonosyl-(1-&gt;4)-D-galacturonate + [(1-&gt;4)-alpha-D-galacturonosyl](n-2). Its function is as follows. Contributes significantly to bacterial utilization of polygalacturonate and the induction of pectate lyase in the presence of extracellular pectic polymers. The sequence is that of Exo-poly-alpha-D-galacturonosidase (pehX) from Dickeya chrysanthemi (Pectobacterium chrysanthemi).